The chain runs to 97 residues: YcgL domain-containing protein PputW619_3899 (97 aa).

The 85-residue stretch at Arg3–Pro87 folds into the YcgL domain.

This chain is YcgL domain-containing protein PputW619_3899, found in Pseudomonas putida (strain W619).